A 315-amino-acid chain; its full sequence is Ester hydrolase C11orf54 homolog (315 aa).

Zn(2+) is bound by residues histidine 266, histidine 268, and histidine 278.

As to quaternary structure, monomer. Zn(2+) serves as cofactor.

It localises to the nucleus. Its subcellular location is the cytoplasm. Its function is as follows. Exhibits ester hydrolase activity on the substrate p-nitrophenyl acetate, in vitro. Regulates DNA damage and repair by regulating HIF1A degradation via chaperone-mediated autophagy (CMA). The chain is Ester hydrolase C11orf54 homolog from Rattus norvegicus (Rat).